The chain runs to 568 residues: 2-succinyl-5-enolpyruvyl-6-hydroxy-3-cyclohexene-1-carboxylate synthase (568 aa).

Belongs to the TPP enzyme family. MenD subfamily. As to quaternary structure, homodimer. Requires Mg(2+) as cofactor. Mn(2+) serves as cofactor. Thiamine diphosphate is required as a cofactor.

It catalyses the reaction isochorismate + 2-oxoglutarate + H(+) = 5-enolpyruvoyl-6-hydroxy-2-succinyl-cyclohex-3-ene-1-carboxylate + CO2. It functions in the pathway quinol/quinone metabolism; 1,4-dihydroxy-2-naphthoate biosynthesis; 1,4-dihydroxy-2-naphthoate from chorismate: step 2/7. The protein operates within quinol/quinone metabolism; menaquinone biosynthesis. Functionally, catalyzes the thiamine diphosphate-dependent decarboxylation of 2-oxoglutarate and the subsequent addition of the resulting succinic semialdehyde-thiamine pyrophosphate anion to isochorismate to yield 2-succinyl-5-enolpyruvyl-6-hydroxy-3-cyclohexene-1-carboxylate (SEPHCHC). The sequence is that of 2-succinyl-5-enolpyruvyl-6-hydroxy-3-cyclohexene-1-carboxylate synthase from Histophilus somni (strain 129Pt) (Haemophilus somnus).